The sequence spans 491 residues: MAAVDVNQPITGHKSAIIRNYNTNPRLIYQTVCGVNGPLVILNDVKFPQFSEIVKITLPDGSKRSGQVLEISKNKAVVQVFEGTSGIDAKNTICEFTGDILRTPVSEDMLGRIFNGSGKPIDKGPPVLAEDFLDINGQPINPWSRIYPEEMIQTGISAIDVMNSIARGQKIPIFSASGLPHNEIAAQIVRQGGLVQLPDRPHEQTNFAIVFAAMGVNMETARFFKQDFEENGSMENVCLFLNLANDPTIERIITPRIALTSAEFLAYQCKKHVLVVLTDMSSYAEALREVSAAREEVPGRRGFPGYMYTDLATIYERAGRVEGRDGSITQIPILTMPNDDITHPIPDLTGYITEGQIYVDRQLHNRLIYPPINVLPSLSRLMKSAIGEGMTREDHSDVSNQLYACYAIGKDVQAMKAVVGEEALSSDDLLYLEFLTKFEKNFITQGHYENRSVFESLDIGWQLLRIFPREMLKRIPESTLEKYYPRGGAKE.

Arg380 serves as a coordination point for ATP.

It belongs to the ATPase alpha/beta chains family. In terms of assembly, V-ATPase is a heteromultimeric enzyme made up of two complexes: the ATP-hydrolytic V1 complex and the proton translocation V0 complex. The V1 complex consists of three catalytic AB heterodimers that form a heterohexamer, three peripheral stalks each consisting of EG heterodimers, one central rotor including subunits D and F, and the regulatory subunits C and H. The proton translocation complex V0 consists of the proton transport subunit a, a ring of proteolipid subunits c9c'', rotary subunit d, subunits e and f, and the accessory subunits vah-19/Ac45 and vah-20/PRR. Expressed ubiquitously. Highly expressed in the H-shaped excretory cell, the excretory pore, the intestine, and hypodermal cells. Expressed in the nervous system. Expressed at low levels in muscles.

Functionally, non-catalytic subunit of the V1 complex of vacuolar(H+)-ATPase (V-ATPase), a multisubunit enzyme composed of a peripheral complex (V1) that hydrolyzes ATP and a membrane integral complex (V0) that translocates protons. V-ATPase is responsible for acidifying and maintaining the pH of intracellular compartments and in some cell types, is targeted to the plasma membrane, where it is responsible for acidifying the extracellular environment. Essential for the proper assembly and activity of V-ATPase. Required maternally for early embryogenesis and zygotically during morphogenesis. Specifically, involved in the clearance of apoptotic cell corpses in embryos. Also, during embryonic development, the V-ATPase is required to repress fusion of epidermal cells probably by negatively regulating eff-1-mediated cell fusion. In neurons, required for necrotic cell death by promoting intracellular acidification. Required for cell death induced by hypoxia. Required for acidification of synaptic vesicles and the release of neurotransmitters from adult neurons. This chain is V-type proton ATPase subunit B 1, found in Caenorhabditis elegans.